A 487-amino-acid polypeptide reads, in one-letter code: Betaine aldehyde dehydrogenase 1 (487 aa).

Residues Ser-26, Ile-27, and Asp-93 each contribute to the K(+) site. 150-152 (GAW) serves as a coordination point for NAD(+). Residue Lys-162 is the Charge relay system of the active site. NAD(+) is bound by residues 176–179 (KPSE) and 229–232 (SVPT). Leu-244 lines the K(+) pocket. The active-site Proton acceptor is Glu-250. Gly-252, Cys-284, and Glu-384 together coordinate NAD(+). Residue Cys-284 is the Nucleophile of the active site. Cys-284 is subject to Cysteine sulfenic acid (-SOH). Positions 454 and 457 each coordinate K(+). The active-site Charge relay system is the Glu-461.

This sequence belongs to the aldehyde dehydrogenase family. As to quaternary structure, dimer of dimers. The cofactor is K(+).

The enzyme catalyses betaine aldehyde + NAD(+) + H2O = glycine betaine + NADH + 2 H(+). It functions in the pathway amine and polyamine biosynthesis; betaine biosynthesis via choline pathway; betaine from betaine aldehyde: step 1/1. Involved in the biosynthesis of the osmoprotectant glycine betaine. Catalyzes the irreversible oxidation of betaine aldehyde to the corresponding acid. The chain is Betaine aldehyde dehydrogenase 1 from Rhizobium meliloti (strain 1021) (Ensifer meliloti).